The chain runs to 831 residues: Periplasmic nitrate reductase (831 aa).

The segment at residues 1-29 (MKISRRDFIKQTAITATASVAGVTLPAGA) is a signal peptide (tat-type signal). Residues 41 to 97 (LKWSKAPCRFCGTGCGVTVAVKDNKVVATQGDPQAEVNKGLNCVKGYFLSKIMYGQD) enclose the 4Fe-4S Mo/W bis-MGD-type domain. [4Fe-4S] cluster contacts are provided by cysteine 48, cysteine 51, cysteine 55, and cysteine 83. Mo-bis(molybdopterin guanine dinucleotide)-binding positions include lysine 85, glutamine 152, asparagine 177, cysteine 181, 214–221 (WGSNMAEM), 245–249 (STFTH), 264–266 (QTD), methionine 375, glutamine 379, asparagine 485, 511–512 (SD), lysine 534, aspartate 561, and 721–730 (TGRVLEHWHS). Residue tryptophan 797 coordinates substrate. Mo-bis(molybdopterin guanine dinucleotide)-binding residues include asparagine 805 and lysine 822.

This sequence belongs to the prokaryotic molybdopterin-containing oxidoreductase family. NasA/NapA/NarB subfamily. As to quaternary structure, component of the periplasmic nitrate reductase NapAB complex composed of NapA and NapB. [4Fe-4S] cluster serves as cofactor. Mo-bis(molybdopterin guanine dinucleotide) is required as a cofactor. Post-translationally, predicted to be exported by the Tat system. The position of the signal peptide cleavage has been experimentally proven.

It localises to the periplasm. The catalysed reaction is 2 Fe(II)-[cytochrome] + nitrate + 2 H(+) = 2 Fe(III)-[cytochrome] + nitrite + H2O. Its function is as follows. Catalytic subunit of the periplasmic nitrate reductase complex NapAB. Receives electrons from NapB and catalyzes the reduction of nitrate to nitrite. The protein is Periplasmic nitrate reductase of Cupriavidus necator (strain ATCC 17699 / DSM 428 / KCTC 22496 / NCIMB 10442 / H16 / Stanier 337) (Ralstonia eutropha).